An 854-amino-acid chain; its full sequence is Zinc finger protein 341 (854 aa).

A C2H2-type 1; atypical zinc finger spans residues 53 to 76 (FLCGKCKKQFNSLPAFMTHKREQC). The disordered stretch occupies residues 152–217 (DQPMPQGPPP…GRPNPGGNGV (66 aa)). A compositionally biased stretch (polar residues) spans 163–176 (QSSLNMHSVPSYLT). The segment covering 177-210 (QPPPPPPPPPPLPPPPPPQPPPPPPQSLGPPGRP) has biased composition (pro residues). 2 C2H2-type zinc fingers span residues 322–344 (LKCS…IRSH) and 350–372 (FQCI…MQTH). The tract at residues 399 to 434 (SRQEDEESTGLGQPLPGAPQPQALSTAGEEEGDKPE) is disordered. A compositionally biased stretch (low complexity) spans 408-422 (GLGQPLPGAPQPQAL). 9 C2H2-type zinc fingers span residues 445-467 (YLCQ…MTQH), 473-497 (YKCV…IKSH), 503-525 (YRCH…QYSH), 540-564 (YKCV…TATH), 566-588 (FPCP…LPTH), 594-616 (FKCQ…AHIH), 622-644 (YKCS…MLIH), 650-677 (YKCP…ILSH), and 683-705 (HKCA…QRAH). Positions 731-763 (CRLGPQKDKDLQTRRPPQRRAAPRSCGSGGRKV) are disordered.

This sequence belongs to the krueppel C2H2-type zinc-finger protein family. In terms of assembly, binds DNA and to the STAT3 promoter.

Its subcellular location is the nucleus. Functionally, transcriptional activator of STAT3 involved in the regulation of immune homeostasis. Also able to activate STAT1 transcription. The protein is Zinc finger protein 341 (ZNF341) of Homo sapiens (Human).